A 131-amino-acid polypeptide reads, in one-letter code: Large ribosomal subunit protein bL19c (131 aa).

This sequence belongs to the bacterial ribosomal protein bL19 family.

The protein localises to the plastid. Its subcellular location is the cyanelle. Functionally, this protein is located at the 30S-50S ribosomal subunit interface and may play a role in the structure and function of the aminoacyl-tRNA binding site. This is Large ribosomal subunit protein bL19c (rpl19) from Cyanophora paradoxa.